The chain runs to 301 residues: GTPase Era (301 aa).

The Era-type G domain occupies 4–173 (KAGFVALIGK…LECISQHLSP (170 aa)). The tract at residues 12-19 (GKPNAGKS) is G1. 12–19 (GKPNAGKS) is a binding site for GTP. The tract at residues 38-42 (NATRK) is G2. The G3 stretch occupies residues 64–67 (DTPG). GTP-binding positions include 64–68 (DTPGL) and 122–125 (SKID). The G4 stretch occupies residues 122–125 (SKID). The tract at residues 152–154 (LSA) is G5. The region spanning 204–280 (LSDEIPYESD…FLNLQVIAQK (77 aa)) is the KH type-2 domain.

It belongs to the TRAFAC class TrmE-Era-EngA-EngB-Septin-like GTPase superfamily. Era GTPase family. As to quaternary structure, monomer.

Its subcellular location is the cytoplasm. It localises to the cell inner membrane. In terms of biological role, an essential GTPase that binds both GDP and GTP, with rapid nucleotide exchange. Plays a role in 16S rRNA processing and 30S ribosomal subunit biogenesis and possibly also in cell cycle regulation and energy metabolism. This chain is GTPase Era, found in Helicobacter pylori (strain ATCC 700392 / 26695) (Campylobacter pylori).